A 500-amino-acid chain; its full sequence is L-arabinose isomerase (500 aa).

Mn(2+) is bound by residues E306, E333, H350, and H450.

The protein belongs to the arabinose isomerase family. In terms of assembly, homohexamer. The cofactor is Mn(2+).

It carries out the reaction beta-L-arabinopyranose = L-ribulose. Its pathway is carbohydrate degradation; L-arabinose degradation via L-ribulose; D-xylulose 5-phosphate from L-arabinose (bacterial route): step 1/3. Its function is as follows. Catalyzes the conversion of L-arabinose to L-ribulose. The protein is L-arabinose isomerase of Yersinia pestis bv. Antiqua (strain Nepal516).